A 340-amino-acid polypeptide reads, in one-letter code: Anthranilate phosphoribosyltransferase (340 aa).

5-phospho-alpha-D-ribose 1-diphosphate is bound by residues glycine 78, 81–82 (GD), threonine 86, 88–91 (NIST), 106–114 (KHGNRSVSS), and serine 118. Residue glycine 78 participates in anthranilate binding. Serine 90 lines the Mg(2+) pocket. Position 109 (asparagine 109) interacts with anthranilate. Anthranilate is bound at residue arginine 164. 2 residues coordinate Mg(2+): aspartate 223 and glutamate 224.

This sequence belongs to the anthranilate phosphoribosyltransferase family. In terms of assembly, homodimer. Mg(2+) serves as cofactor.

It catalyses the reaction N-(5-phospho-beta-D-ribosyl)anthranilate + diphosphate = 5-phospho-alpha-D-ribose 1-diphosphate + anthranilate. Its pathway is amino-acid biosynthesis; L-tryptophan biosynthesis; L-tryptophan from chorismate: step 2/5. In terms of biological role, catalyzes the transfer of the phosphoribosyl group of 5-phosphorylribose-1-pyrophosphate (PRPP) to anthranilate to yield N-(5'-phosphoribosyl)-anthranilate (PRA). In Bacillus pumilus (Bacillus mesentericus), this protein is Anthranilate phosphoribosyltransferase.